The sequence spans 359 residues: Serum paraoxonase/arylesterase 1 (359 aa).

A disulfide bridge connects residues C42 and C353. A glycan (N-linked (GlcNAc...) asparagine) is linked at N50. Residues E53 and D54 each contribute to the Ca(2+) site. H115 functions as the Proton acceptor in the catalytic mechanism. Residues I117, N168, D169, and N224 each contribute to the Ca(2+) site. Residue N253 is glycosylated (N-linked (GlcNAc...) asparagine). The Ca(2+) site is built by D269 and N270. N270 and N324 each carry an N-linked (GlcNAc...) asparagine glycan.

The protein belongs to the paraoxonase family. As to quaternary structure, homodimer. Interacts with CLU. The cofactor is Ca(2+). Post-translationally, glycosylated. The signal sequence is not cleaved. Plasma. Associated with HDL.

The protein resides in the secreted. Its subcellular location is the extracellular space. It carries out the reaction a phenyl acetate + H2O = a phenol + acetate + H(+). The enzyme catalyses An aryl dialkyl phosphate + H2O = dialkyl phosphate + an aryl alcohol.. The catalysed reaction is an N-acyl-L-homoserine lactone + H2O = an N-acyl-L-homoserine + H(+). Its function is as follows. Hydrolyzes the toxic metabolites of a variety of organophosphorus insecticides. Capable of hydrolyzing a broad spectrum of organophosphate substrates and lactones, and a number of aromatic carboxylic acid esters. Mediates an enzymatic protection of low density lipoproteins against oxidative modification. The protein is Serum paraoxonase/arylesterase 1 (PON1) of Oryctolagus cuniculus (Rabbit).